The sequence spans 596 residues: Beta-fructofuranosidase, insoluble isoenzyme 7 (596 aa).

The N-terminal stretch at 1 to 24 is a signal peptide; the sequence is MARLGLAVCAASFHLFLLLASTSS. Substrate is bound by residues 51–54, Gln70, and Trp78; that span reads WQND. Asp54 is an active-site residue. A glycan (N-linked (GlcNAc...) asparagine) is linked at Asn82. Substrate is bound by residues 115-116, 179-180, and Glu234; these read WS and RD. The N-linked (GlcNAc...) asparagine glycan is linked to Asn330. Cys432 and Cys478 are oxidised to a cystine. Asn552 carries N-linked (GlcNAc...) asparagine glycosylation.

This sequence belongs to the glycosyl hydrolase 32 family.

The protein localises to the secreted. It is found in the extracellular space. It localises to the apoplast. Its subcellular location is the cell wall. It carries out the reaction Hydrolysis of terminal non-reducing beta-D-fructofuranoside residues in beta-D-fructofuranosides.. In terms of biological role, may play a role in sucrose partitioning during seed development. The protein is Beta-fructofuranosidase, insoluble isoenzyme 7 (CIN7) of Oryza sativa subsp. indica (Rice).